Here is a 544-residue protein sequence, read N- to C-terminus: MAAKDVQFGNEVRQKMVNGVNILANAVRVTLGPKGRNVVVDRAFGGPHITKDGVTVAKEIELKDKFENMGAQMVKEVASKTNDVAGDGTTTATVLAQSIVAEGMKYVTAGMNPTDLKRGIDKAVAALVDELKNIAKPCDTSKEIAQVGSISANSDEQVGAIIAEAMEKVGKEGVITVEDGKSLENELDVVEGMQFDRGYLSPYFINDAEKQIAALDNPFVLLFDKKISNIRDLLPVLEQVAKASRPLLIIAEDVEGEALATLVVNNIRGILKTVAVKAPGFGDRRKAMLQDIAILTGGVVISEEVGLSLEKATLDDLGQAKRIEIGKENTTIIDGFGDAAQIEARVAEIRQQIETATSDYDKEKLQERVAKLAGGVAVIKVGAATEVEMKEKKDRVEDALHATRAAVEEGVVAGGGVALLRARAALENLHTGNADQDAGVQIVLRAVESPLRQIVANAGGEPSVVVNKVLEGKGNYGYNAGSGEYGDMIEMGVLDPAKVTRSALQHAASIAGLMLTTDCMIAEIPEDKPAVPDMGGMGGMGGMM.

Residues 30–33 (TLGP), lysine 51, 87–91 (DGTTT), glycine 415, and aspartate 495 each bind ATP.

It belongs to the chaperonin (HSP60) family. As to quaternary structure, forms a cylinder of 14 subunits composed of two heptameric rings stacked back-to-back. Interacts with the co-chaperonin GroES.

It localises to the cytoplasm. The enzyme catalyses ATP + H2O + a folded polypeptide = ADP + phosphate + an unfolded polypeptide.. Functionally, together with its co-chaperonin GroES, plays an essential role in assisting protein folding. The GroEL-GroES system forms a nano-cage that allows encapsulation of the non-native substrate proteins and provides a physical environment optimized to promote and accelerate protein folding. This chain is Chaperonin GroEL, found in Neisseria meningitidis serogroup B (strain ATCC BAA-335 / MC58).